The sequence spans 86 residues: Exodeoxyribonuclease 7 small subunit (86 aa).

Residues 1 to 27 form a disordered region; sequence MQDELFETEKIPPKNTKNAKNAPKKSF.

Belongs to the XseB family. As to quaternary structure, heterooligomer composed of large and small subunits.

Its subcellular location is the cytoplasm. It carries out the reaction Exonucleolytic cleavage in either 5'- to 3'- or 3'- to 5'-direction to yield nucleoside 5'-phosphates.. Functionally, bidirectionally degrades single-stranded DNA into large acid-insoluble oligonucleotides, which are then degraded further into small acid-soluble oligonucleotides. This Helicobacter pylori (strain G27) protein is Exodeoxyribonuclease 7 small subunit.